Here is a 488-residue protein sequence, read N- to C-terminus: Glycogen synthase (488 aa).

ADP-alpha-D-glucose is bound at residue arginine 20.

This sequence belongs to the glycosyltransferase 1 family. Bacterial/plant glycogen synthase subfamily.

The catalysed reaction is [(1-&gt;4)-alpha-D-glucosyl](n) + ADP-alpha-D-glucose = [(1-&gt;4)-alpha-D-glucosyl](n+1) + ADP + H(+). Its pathway is glycan biosynthesis; glycogen biosynthesis. Synthesizes alpha-1,4-glucan chains using ADP-glucose. This is Glycogen synthase from Chlorobaculum parvum (strain DSM 263 / NCIMB 8327) (Chlorobium vibrioforme subsp. thiosulfatophilum).